Consider the following 329-residue polypeptide: Ficolin-2 (329 aa).

Residues 1-29 (MELGGAAGALGPSGPLLVCLCFGTLAAQA) form the signal peptide. A Collagen-like domain is found at 52-111 (GCPGLPGAPGLKGETGAAGLKGERGLPGVPGKAGPAGPKGSTGAQGEKGARGEKGESGQL). The interval 64-113 (GETGAAGLKGERGLPGVPGKAGPAGPKGSTGAQGEKGARGEKGESGQLHS) is disordered. Low complexity predominate over residues 77 to 90 (LPGVPGKAGPAGPK). A Fibrinogen C-terminal domain is found at 112 to 329 (HSCATGPRTC…KVSEMKLRLT (218 aa)). Intrachain disulfides connect Cys-114/Cys-142 and Cys-121/Cys-149. Asp-265, Asp-267, Ser-269, and Ser-271 together coordinate Ca(2+). A disulfide bond links Cys-273 and Cys-286. Asn-316 carries an N-linked (GlcNAc...) asparagine glycan.

It belongs to the ficolin lectin family. Homotrimer. Interacts with elastin. Interacts with MASP1 and MASP2.

Its subcellular location is the secreted. In terms of biological role, may function in innate immunity through activation of the lectin complement pathway. Calcium-dependent and GlcNAc-binding lectin. This chain is Ficolin-2 (FCN2), found in Bos taurus (Bovine).